The primary structure comprises 67 residues: COP9 signalosome complex subunit 9 homolog (67 aa).

The tract at residues 1–31 (MKPSLAADEMFSEGPGYMEMDESGGATGMMM) is disordered.

It belongs to the CSN9 family. As to quaternary structure, probable component of the COP9 signalosome (CSN) complex.

Functionally, component of the COP9 signalosome complex (CSN), a complex involved in various cellular and developmental processes. The CSN complex is an essential regulator of the ubiquitin (Ubl) conjugation pathway by mediating the deneddylation of the cullin subunits of SCF-type E3 ligase complexes, leading to decrease the Ubl ligase activity. The polypeptide is COP9 signalosome complex subunit 9 homolog (Drosophila melanogaster (Fruit fly)).